The chain runs to 151 residues: Flagellar assembly factor FliW (151 aa).

The protein belongs to the FliW family. Interacts with translational regulator CsrA and flagellin(s).

The protein localises to the cytoplasm. Acts as an anti-CsrA protein, binds CsrA and prevents it from repressing translation of its target genes, one of which is flagellin. Binds to flagellin and participates in the assembly of the flagellum. This chain is Flagellar assembly factor FliW, found in Natranaerobius thermophilus (strain ATCC BAA-1301 / DSM 18059 / JW/NM-WN-LF).